A 98-amino-acid polypeptide reads, in one-letter code: Ubiquitin-related modifier 1 (98 aa).

The residue at position 98 (Gly-98) is a 1-thioglycine. A Glycyl lysine isopeptide (Gly-Lys) (interchain with K-? in acceptor proteins) cross-link involves residue Gly-98.

This sequence belongs to the URM1 family. C-terminal thiocarboxylation occurs in 2 steps, it is first acyl-adenylated (-COAMP) via the hesA/moeB/thiF part of UBA4, then thiocarboxylated (-COSH) via the rhodanese domain of UBA4.

The protein resides in the cytoplasm. Its pathway is tRNA modification; 5-methoxycarbonylmethyl-2-thiouridine-tRNA biosynthesis. In terms of biological role, acts as a sulfur carrier required for 2-thiolation of mcm(5)S(2)U at tRNA wobble positions of cytosolic tRNA(Lys), tRNA(Glu) and tRNA(Gln). Serves as sulfur donor in tRNA 2-thiolation reaction by being thiocarboxylated (-COSH) at its C-terminus by the MOCS3 homolog UBA4. The sulfur is then transferred to tRNA to form 2-thiolation of mcm(5)S(2)U. Prior mcm(5) tRNA modification by the elongator complex is required for 2-thiolation. Also acts as a ubiquitin-like protein (UBL) that is covalently conjugated via an isopeptide bond to lysine residues of target proteins such as AHP1. The thiocarboxylated form serves as substrate for conjugation and oxidative stress specifically induces the formation of UBL-protein conjugates. The protein is Ubiquitin-related modifier 1 of Candida glabrata (strain ATCC 2001 / BCRC 20586 / JCM 3761 / NBRC 0622 / NRRL Y-65 / CBS 138) (Yeast).